The sequence spans 457 residues: Asparagine--tRNA ligase (457 aa).

Belongs to the class-II aminoacyl-tRNA synthetase family. In terms of assembly, homodimer.

Its subcellular location is the cytoplasm. It catalyses the reaction tRNA(Asn) + L-asparagine + ATP = L-asparaginyl-tRNA(Asn) + AMP + diphosphate + H(+). The protein is Asparagine--tRNA ligase of Phytoplasma australiense.